Here is an 84-residue protein sequence, read N- to C-terminus: Sulfur carrier protein TusA (84 aa).

Cys21 acts as the Cysteine persulfide intermediate in catalysis.

It belongs to the sulfur carrier protein TusA family.

It localises to the cytoplasm. Its function is as follows. Sulfur carrier protein which probably makes part of a sulfur-relay system. The protein is Sulfur carrier protein TusA of Pseudomonas savastanoi pv. phaseolicola (strain 1448A / Race 6) (Pseudomonas syringae pv. phaseolicola (strain 1448A / Race 6)).